We begin with the raw amino-acid sequence, 879 residues long: Aminopeptidase M1 (879 aa).

The required for membrane association stretch occupies residues His-98 to Val-205. Residues Glu-138 and Gly-271–Asn-275 each bind substrate. Residue His-307 participates in Zn(2+) binding. Glu-308 serves as the catalytic Proton acceptor. Zn(2+) contacts are provided by His-311 and Glu-330. A Dileucine internalization motif motif is present at residues Leu-728–Leu-729.

This sequence belongs to the peptidase M1 family. In terms of assembly, homodimer. Interacts with N-1-naphthylphthalamic acid (NPA). The cofactor is Zn(2+). In terms of tissue distribution, ubiquitous with preferential expression in 5 days-old seedlings, roots, young flowers, upper inflorescence stems, and rosette leaves.

Its subcellular location is the membrane. The protein localises to the microsome membrane. It is found in the cytoplasm. The enzyme catalyses Release of an N-terminal amino acid, Xaa-|-Yaa- from a peptide, amide or arylamide. Xaa is preferably Ala, but may be most amino acids including Pro (slow action). When a terminal hydrophobic residue is followed by a prolyl residue, the two may be released as an intact Xaa-Pro dipeptide.. Functionally, metallopeptidase that binds to the auxin transport inhibitor N-1-naphthylphthalamic acid (NPA). Required for embryonic and seedling development as well as cell cycle progression. Homodimerization is required to proper localization and activity. May play a negative role in the regulation of PIN auxin transport proteins. This chain is Aminopeptidase M1 (APM1), found in Arabidopsis thaliana (Mouse-ear cress).